The sequence spans 206 residues: Ras-related protein Ral-B (206 aa).

21 to 29 (GSGGVGKSA) provides a ligand contact to GTP. Residues 43-51 (YEPTKADSY) carry the Effector region motif. GTP-binding positions include 68 to 72 (DTAGQ), 128 to 131 (NKSD), and 158 to 160 (SAK). Residues 181-206 (MSENKDKNGRKSSKSKKSFKERCCLL) are disordered. Position 203 is a cysteine methyl ester (Cys-203). Cys-203 carries S-geranylgeranyl cysteine lipidation. A propeptide spans 204–206 (CLL) (removed in mature form).

This sequence belongs to the small GTPase superfamily. Ras family. In terms of assembly, interacts with EXOC2/Sec5 and EXOC8/Exo84. Interacts (via effector domain) with RALBP1. Post-translationally, prenylation is essential for membrane localization. The farnesylated form confers resistance to the proapoptotic and anti-anchorage-dependent growth effects of some geranylgeranyltransferase I inhibitors.

Its subcellular location is the cell membrane. It localises to the midbody. It carries out the reaction GTP + H2O = GDP + phosphate + H(+). Its activity is regulated as follows. Alternates between an inactive form bound to GDP and an active form bound to GTP. Activated by a guanine nucleotide-exchange factor (GEF) and inactivated by a GTPase-activating protein (GAP). Its function is as follows. Multifunctional GTPase involved in a variety of cellular processes including gene expression, cell migration, cell proliferation, oncogenic transformation and membrane trafficking. Accomplishes its multiple functions by interacting with distinct downstream effectors. Acts as a GTP sensor for GTP-dependent exocytosis of dense core vesicles. Required both to stabilize the assembly of the exocyst complex and to localize functional exocyst complexes to the leading edge of migrating cells. Required for suppression of apoptosis. In late stages of cytokinesis, upon completion of the bridge formation between dividing cells, mediates exocyst recruitment to the midbody to drive abscission. Involved in ligand-dependent receptor mediated endocytosis of the EGF and insulin receptors. The polypeptide is Ras-related protein Ral-B (Ralb) (Mus musculus (Mouse)).